A 366-amino-acid chain; its full sequence is Histidinol-phosphate aminotransferase 1 (366 aa).

At Lys-226 the chain carries N6-(pyridoxal phosphate)lysine.

It belongs to the class-II pyridoxal-phosphate-dependent aminotransferase family. Histidinol-phosphate aminotransferase subfamily. In terms of assembly, homodimer. Pyridoxal 5'-phosphate serves as cofactor.

It carries out the reaction L-histidinol phosphate + 2-oxoglutarate = 3-(imidazol-4-yl)-2-oxopropyl phosphate + L-glutamate. The protein operates within amino-acid biosynthesis; L-histidine biosynthesis; L-histidine from 5-phospho-alpha-D-ribose 1-diphosphate: step 7/9. The protein is Histidinol-phosphate aminotransferase 1 of Mannheimia succiniciproducens (strain KCTC 0769BP / MBEL55E).